Reading from the N-terminus, the 204-residue chain is Translation initiation factor 2 subunit beta (204 aa).

The 59-residue stretch at 146–204 (AIEEGKELEVHIESISKKGDGVARIGKYILYVAGTKAGQNVKVRITRISGQVAFTQKIL) folds into the TRAM domain.

This sequence belongs to the eIF-2-beta/eIF-5 family. As to quaternary structure, heterotrimer composed of an alpha, a beta and a gamma chain.

EIF-2 functions in the early steps of protein synthesis by forming a ternary complex with GTP and initiator tRNA. In Methanocorpusculum labreanum (strain ATCC 43576 / DSM 4855 / Z), this protein is Translation initiation factor 2 subunit beta.